A 551-amino-acid chain; its full sequence is E3 ubiquitin-protein ligase TRIM8 (551 aa).

An RING-type zinc finger spans residues 15–56; it reads CPICLHVFVEPVQLPCKHNFCRGCIGEAWAKDSGLVRCPECN. 2 B box-type zinc fingers span residues 92–132 and 140–182; these read CVFC…ARGH and VRAW…VCDV. Coiled-coil stretches lie at residues 181-249 and 274-295; these read DVEI…DLRQ and ERMQ…KTED. The tract at residues 399–457 is disordered; it reads QYGAAGTASSEGQSGQPLGPCSSTQHLVALPGGTQPVHSSPVFPPSQYPNGSTTQQPML. 2 stretches are compositionally biased toward polar residues: residues 405 to 424 and 446 to 456; these read TASS…STQH and YPNGSTTQQPM.

This sequence belongs to the TRIM/RBCC family. As to quaternary structure, homodimer. Interacts with SOCS1 (via) SH2 domain and SOCS box. Interacts with HSP90AB1; prevents nucleus translocation of phosphorylated STAT3 and HSP90AB1. Interacts with MAP3K7/TAK1. Interacts with PIAS3. Interacts with TICAM1. Interacts with TRIM15; this interaction prevents TRIM8 cytoplasmic translocation. As to expression, high expression in heart, liver, and thymus. Expressed in embryonic CNS, kidney, lens and gut.

The catalysed reaction is S-ubiquitinyl-[E2 ubiquitin-conjugating enzyme]-L-cysteine + [acceptor protein]-L-lysine = [E2 ubiquitin-conjugating enzyme]-L-cysteine + N(6)-ubiquitinyl-[acceptor protein]-L-lysine.. It participates in protein modification; protein ubiquitination. In terms of biological role, E3 ubiquitin-protein ligase that participates in multiple biological processes including cell survival, differentiation, apoptosis, and in particular, the innate immune response. Participates in the activation of interferon-gamma signaling by promoting proteasomal degradation of the repressor SOCS1. Plays a positive role in the TNFalpha and IL-1beta signaling pathways. Mechanistically, induces the 'Lys-63'-linked polyubiquitination of MAP3K7/TAK1 component leading to the activation of NF-kappa-B. Also modulates STAT3 activity through negative regulation of PIAS3, either by degradation of PIAS3 through the ubiquitin-proteasome pathway or exclusion of PIAS3 from the nucleus. Negatively regulates TLR3/4-mediated innate immune response by catalyzing 'Lys-6'- and 'Lys-33'-linked polyubiquitination of TICAM1 and thereby disrupting the TICAM1-TBK1 interaction. This Mus musculus (Mouse) protein is E3 ubiquitin-protein ligase TRIM8 (Trim8).